The primary structure comprises 424 residues: Histidine--tRNA ligase (424 aa).

It belongs to the class-II aminoacyl-tRNA synthetase family. In terms of assembly, homodimer.

The protein resides in the cytoplasm. The catalysed reaction is tRNA(His) + L-histidine + ATP = L-histidyl-tRNA(His) + AMP + diphosphate + H(+). This is Histidine--tRNA ligase from Sodalis glossinidius (strain morsitans).